We begin with the raw amino-acid sequence, 206 residues long: MGRFRGSITKLSRREGINLAETEKVQKYLDRRPYAPGQHGQRRGRGRPSDYSVRLREKQKLARLYGVNEKQFRNLFEEAANVPGVTGTVFLQLLERRLDNVVFRMGFASTRRQARQFVGHGHILVNGKRVDIPSYRVRIGDEISVAEGSRSMGFIQENMEAQKRRRVSPWIELNPDTFTGTFVRLPAREDLALPINENFIIEYYSR.

The tract at residues 28–52 (YLDRRPYAPGQHGQRRGRGRPSDYS) is disordered. Positions 96-171 (RRLDNVVFRM…QKRRRVSPWI (76 aa)) constitute an S4 RNA-binding domain.

Belongs to the universal ribosomal protein uS4 family. In terms of assembly, part of the 30S ribosomal subunit. Contacts protein S5. The interaction surface between S4 and S5 is involved in control of translational fidelity.

In terms of biological role, one of the primary rRNA binding proteins, it binds directly to 16S rRNA where it nucleates assembly of the body of the 30S subunit. Its function is as follows. With S5 and S12 plays an important role in translational accuracy. The polypeptide is Small ribosomal subunit protein uS4 (Deinococcus geothermalis (strain DSM 11300 / CIP 105573 / AG-3a)).